The sequence spans 527 residues: Transcriptional regulator ATRX (527 aa).

The tract at residues G1–R527 is disordered. Polar residues predominate over residues R14 to G23. The segment covering P27–K46 has biased composition (basic and acidic residues). The segment covering E47–K59 has biased composition (basic residues). Over residues V60–Q84 the composition is skewed to basic and acidic residues. A phosphoserine mark is found at S62 and S74. Residues G85 to K94 show a composition bias toward basic residues. 4 stretches are compositionally biased toward basic and acidic residues: residues K95–E122, N136–K145, D152–Q194, and K204–K250. A Glycyl lysine isopeptide (Lys-Gly) (interchain with G-Cter in SUMO2) cross-link involves residue K105. Phosphoserine occurs at positions 112, 113, and 114. S162 bears the Phosphoserine mark. Residue R184 is modified to Citrulline. Residues K267–R297 show a composition bias toward basic residues. The interaction with DAXX stretch occupies residues L290 to S427. 3 positions are modified to phosphoserine: S345, S346, and S354. Residues P368 to K382 show a composition bias toward basic and acidic residues. Residues S387–K398 show a composition bias toward acidic residues. The segment covering E399–E410 has biased composition (basic and acidic residues). A phosphoserine mark is found at S423, S425, and S427. The segment covering P435 to L446 has biased composition (basic residues). Residues S449 and S453 each carry the phosphoserine modification. Composition is skewed to basic and acidic residues over residues G454–G469 and K509–R518.

The protein belongs to the SNF2/RAD54 helicase family. Interacts with DAXX to form the chromatin remodeling complex ATRX:DAXX. Probably binds EZH2. Binds annexin V in a calcium and phosphatidylcholine/phosphatidylserine-dependent manner. Interacts directly with CBX5 via the PxVxL motif. Interacts with RAD50, MRE11 and NBN; indicative for an association with the MRN complex. Interacts with histone MACROH2A1. Interacts with histone H3 peptides methylated at 'Lys-10' with preferences H3K9me3 &gt; H3K9me2 &gt; H3K9me1. Interacts with histone H3 peptides unmethylated at 'Lys-5' (H3K4me0). Interacts with MECP2, SMC1 and SMC3. Interacts with SETDB1, TRIM28 and ZNF274. Citrullinated by PADI4.

It localises to the nucleus. It is found in the chromosome. Its subcellular location is the telomere. The protein localises to the PML body. The catalysed reaction is ATP + H2O = ADP + phosphate + H(+). Its function is as follows. Involved in transcriptional regulation and chromatin remodeling. Facilitates DNA replication in multiple cellular environments and is required for efficient replication of a subset of genomic loci. Binds to DNA tandem repeat sequences in both telomeres and euchromatin and in vitro binds DNA quadruplex structures. May help stabilizing G-rich regions into regular chromatin structures by remodeling G4 DNA and incorporating H3.3-containing nucleosomes. Catalytic component of the chromatin remodeling complex ATRX:DAXX which has ATP-dependent DNA translocase activity and catalyzes the replication-independent deposition of histone H3.3 in pericentric DNA repeats outside S-phase and telomeres, and the in vitro remodeling of H3.3-containing nucleosomes. Its heterochromatin targeting is proposed to involve a combinatorial readout of histone H3 modifications (specifically methylation states of H3K9 and H3K4) and association with CBX5. Involved in maintaining telomere structural integrity in embryonic stem cells probably implying recruitment of CBX5 to telomeres. May be involved in transcriptional regulation of telomeric repeat-containing RNA (TERRA). Acts as a negative regulator of chromatin incorporation of transcriptionally repressive histone MACROH2A1, particularily at telomeres. Participates in the allele-specific gene expression at the imprinted IGF2/H19 gene locus. On the maternal allele, required for the chromatin occupancy of SMC1 and CTCTF within the H19 imprinting control region (ICR) and involved in esatblishment of histone tails modifications in the ICR. Binds to zinc-finger coding genes with atypical chromatin signatures and regulates its H3K9me3 levels. Forms a complex with ZNF274, TRIM28 and SETDB1 to facilitate the deposition and maintenance of H3K9me3 at the 3' exons of zinc-finger genes. This is Transcriptional regulator ATRX (Atrx) from Rattus norvegicus (Rat).